Reading from the N-terminus, the 282-residue chain is uncharacterized protein (282 aa).

An HTH rpiR-type domain is found at 1–77 (MNGLLRIRQR…LALSEALASQ (77 aa)). A DNA-binding region (H-T-H motif) is located at residues 37–56 (SQQLANEAGVSQSSVVKFAQ). The SIS domain maps to 125–265 (CVTMLRSARR…FIALIQQDLE (141 aa)).

This is an uncharacterized protein from Escherichia coli (strain K12).